The sequence spans 537 residues: MALFQLFSFLNVTLGLVSNIYNSTGHLSIDKACSGYSTEVFKGVCLPSYSYVKVDRHILTKDDRYYLGYAKATNREYQLYSLHIGTYDLFGSDIMSCGARGYALGLHNGDLELVLNYCRKVDGQKHIGEVFQSCRFVEYSEHMISGIVHSIPKDLMEEFSPIGKVPYFGIMPFRTECADQCSTKQAFYAMDAYPFYNIGYWFPLCADKYIPLCYSGRTDPCPLGYEERLIKVHSYMEGFESGMKTVCKSGEYIFPAWYSGQSEIYDTVVKPYIVNVPEYCGRFSRSDKSLVYSRFGFRGTIFSGLKVITLDGIDYLTTDFCVNYSMHHYVKPLVFERMRKSFICTSSGCLYKGFDVNHLHDICTPKLIVKRHEALISSFSFINTLGTKVGAVPYDFDGNIIQFIDVFSIDGFYVYSLSHKKIQTLTVMLVQSEEEWYMKLLHFVADDILRECLSTVFKVLFSAISACLSFIIDVGGCCFRQFIFVCLDSVILLLLLLPNYTHLTFILGFTLNAYIQLVYYESCCFRAYRDIAETIDL.

Positions 1-15 are cleaved as a signal peptide; it reads MALFQLFSFLNVTLG. Transmembrane regions (helical) follow at residues 459–479 and 490–510; these read VLFS…GCCF and VILL…LGFT.

The protein resides in the host membrane. This is an uncharacterized protein from Citrus sinensis (Sweet orange).